The sequence spans 201 residues: dITP/XTP pyrophosphatase (201 aa).

Residue 8-13 (TTNENK) coordinates substrate. Catalysis depends on Asp-68, which acts as the Proton acceptor. Asp-68 is a binding site for Mg(2+). Residues Ser-69, 155-158 (FGYD), Lys-177, and 182-183 (HR) contribute to the substrate site.

Belongs to the HAM1 NTPase family. Homodimer. Mg(2+) is required as a cofactor.

The enzyme catalyses XTP + H2O = XMP + diphosphate + H(+). It catalyses the reaction dITP + H2O = dIMP + diphosphate + H(+). The catalysed reaction is ITP + H2O = IMP + diphosphate + H(+). Its function is as follows. Pyrophosphatase that catalyzes the hydrolysis of nucleoside triphosphates to their monophosphate derivatives, with a high preference for the non-canonical purine nucleotides XTP (xanthosine triphosphate), dITP (deoxyinosine triphosphate) and ITP. Seems to function as a house-cleaning enzyme that removes non-canonical purine nucleotides from the nucleotide pool, thus preventing their incorporation into DNA/RNA and avoiding chromosomal lesions. This Borreliella burgdorferi (strain ATCC 35210 / DSM 4680 / CIP 102532 / B31) (Borrelia burgdorferi) protein is dITP/XTP pyrophosphatase.